The chain runs to 315 residues: Shiga-like toxin 1 subunit A (315 aa).

Residues 1 to 22 form the signal peptide; that stretch reads MKIIIFRVLTFFFVIFSVNVVA. An A1 region spans residues 23–273; the sequence is KEFTLDFSTA…CHHHASRVAR (251 aa). Glutamate 189 is an active-site residue. A disulfide bond links cysteine 264 and cysteine 283. Residues 274 to 315 are A2; sequence MASDEFPSMCPADGRVRGITHNKILWDSSTLGAILMRRTISS.

Belongs to the ribosome-inactivating protein family. In terms of assembly, shiga-like toxin contains a single subunit A and five copies of subunit B.

The protein resides in the secreted. The catalysed reaction is Endohydrolysis of the N-glycosidic bond at one specific adenosine on the 28S rRNA.. In terms of biological role, the A subunit is responsible for inhibiting protein synthesis through the catalytic inactivation of 60S ribosomal subunits. After endocytosis, the A subunit is cleaved by furin in two fragments, A1 and A2: A1 is the catalytically active fragment, and A2 is essential for holotoxin assembly with the B subunits. This Escherichia coli (Bacteriophage H19B) protein is Shiga-like toxin 1 subunit A (stxA).